Here is a 423-residue protein sequence, read N- to C-terminus: Histidine--tRNA ligase (423 aa).

This sequence belongs to the class-II aminoacyl-tRNA synthetase family. In terms of assembly, homodimer.

The protein resides in the cytoplasm. It catalyses the reaction tRNA(His) + L-histidine + ATP = L-histidyl-tRNA(His) + AMP + diphosphate + H(+). The protein is Histidine--tRNA ligase of Prochlorococcus marinus (strain NATL1A).